The chain runs to 650 residues: Acetyl-coenzyme A synthetase (650 aa).

CoA-binding positions include 191–194, Thr-311, and Asn-335; that span reads RGGR. ATP contacts are provided by residues 387-389, 411-416, Asp-500, and Arg-515; these read GEP and DTWWQT. Position 523 (Ser-523) interacts with CoA. An ATP-binding site is contributed by Arg-526. 3 residues coordinate Mg(2+): Val-537, His-539, and Val-542. Residue Arg-584 coordinates CoA. Lys-609 is subject to N6-acetyllysine.

It belongs to the ATP-dependent AMP-binding enzyme family. Mg(2+) serves as cofactor. In terms of processing, acetylated. Deacetylation by the SIR2-homolog deacetylase activates the enzyme.

The enzyme catalyses acetate + ATP + CoA = acetyl-CoA + AMP + diphosphate. Catalyzes the conversion of acetate into acetyl-CoA (AcCoA), an essential intermediate at the junction of anabolic and catabolic pathways. AcsA undergoes a two-step reaction. In the first half reaction, AcsA combines acetate with ATP to form acetyl-adenylate (AcAMP) intermediate. In the second half reaction, it can then transfer the acetyl group from AcAMP to the sulfhydryl group of CoA, forming the product AcCoA. The sequence is that of Acetyl-coenzyme A synthetase from Shewanella putrefaciens (strain CN-32 / ATCC BAA-453).